The sequence spans 105 residues: uncharacterized protein (105 aa).

Residues Asn-81–Lys-105 are disordered.

This is an uncharacterized protein from Dictyostelium discoideum (Social amoeba).